Reading from the N-terminus, the 184-residue chain is ADP-ribosylation factor-like protein 8b (184 aa).

An intramembrane region (note=Mediates targeting to membranes) is located at residues 1 to 18 (MGLWDALLNWLRSLFFKQ). GTP-binding positions include 29–34 (NAGKTS), 48–51 (MIPT), 70–74 (DLGGQ), and 129–132 (NKID).

It belongs to the small GTPase superfamily. Arf family. Interacts with tubulin.

Its subcellular location is the late endosome membrane. The protein localises to the lysosome membrane. It is found in the cytoplasm. The protein resides in the cytoskeleton. It localises to the spindle. Its function is as follows. May play a role in lysosome motility. May play a role in chromosome segregation. In terms of biological role, (Microbial infection) Component of tomato mosaic virus (ToMV) RNA replication complexes. Required for tobamovirus multiplication, especially for efficient negative-strand RNA synthesis and viral RNA capping. The polypeptide is ADP-ribosylation factor-like protein 8b (Arabidopsis thaliana (Mouse-ear cress)).